The chain runs to 287 residues: ATP synthase gamma chain (287 aa).

This sequence belongs to the ATPase gamma chain family. F-type ATPases have 2 components, CF(1) - the catalytic core - and CF(0) - the membrane proton channel. CF(1) has five subunits: alpha(3), beta(3), gamma(1), delta(1), epsilon(1). CF(0) has three main subunits: a, b and c.

It localises to the cell membrane. In terms of biological role, produces ATP from ADP in the presence of a proton gradient across the membrane. The gamma chain is believed to be important in regulating ATPase activity and the flow of protons through the CF(0) complex. The chain is ATP synthase gamma chain from Mycoplasmopsis agalactiae (strain NCTC 10123 / CIP 59.7 / PG2) (Mycoplasma agalactiae).